The sequence spans 692 residues: Elongation factor G (692 aa).

The tr-type G domain maps to 8 to 282 (KDTRNIGIMA…AVLDYLPSPL (275 aa)). GTP-binding positions include 17 to 24 (AHIDAGKT), 81 to 85 (DTPGH), and 135 to 138 (NKMD).

It belongs to the TRAFAC class translation factor GTPase superfamily. Classic translation factor GTPase family. EF-G/EF-2 subfamily.

The protein resides in the cytoplasm. In terms of biological role, catalyzes the GTP-dependent ribosomal translocation step during translation elongation. During this step, the ribosome changes from the pre-translocational (PRE) to the post-translocational (POST) state as the newly formed A-site-bound peptidyl-tRNA and P-site-bound deacylated tRNA move to the P and E sites, respectively. Catalyzes the coordinated movement of the two tRNA molecules, the mRNA and conformational changes in the ribosome. The chain is Elongation factor G from Shouchella clausii (strain KSM-K16) (Alkalihalobacillus clausii).